Reading from the N-terminus, the 417-residue chain is Lissencephaly-1 homolog (417 aa).

The region spanning 7-39 (QKEELNRAIADYLFANGYVKALNAFREESQLAG) is the LisH domain. The stretch at 54 to 86 (TSVIRLQKKVMDLEAKLNEAEKEFQSMQNAIGF) forms a coiled coil. WD repeat units follow at residues 120–159 (GHRS…FEHT), 162–203 (GHTD…KTLT), 204–243 (GHDH…CTKT), 246–285 (GHTE…CQVV), 288–340 (GHEH…CLFV), 343–382 (GHDN…CHKT), and 385–417 (AHSH…WDCR).

It belongs to the WD repeat LIS1/nudF family.

The protein resides in the cytoplasm. Its subcellular location is the cytoskeleton. The protein localises to the microtubule organizing center. It is found in the centrosome. Functionally, positively regulates the activity of the minus-end directed microtubule motor protein dynein. May enhance dynein-mediated microtubule sliding by targeting dynein to the microtubule plus end. Required for several dynein- and microtubule-dependent processes. The protein is Lissencephaly-1 homolog of Schistosoma mansoni (Blood fluke).